Here is an 81-residue protein sequence, read N- to C-terminus: Probable small nuclear ribonucleoprotein G (81 aa).

Residues 5-76 (GQPPALKKYM…VVTVEALEPV (72 aa)) form the Sm domain.

This sequence belongs to the snRNP Sm proteins family.

It localises to the nucleus. Functionally, probable common Sm protein, is found in U1 and U2 snRNPs and may be part of the spliceosome. This is Probable small nuclear ribonucleoprotein G (C29) from Medicago sativa (Alfalfa).